The following is a 572-amino-acid chain: DNA mismatch repair protein MutL (572 aa).

Belongs to the DNA mismatch repair MutL/HexB family.

Functionally, this protein is involved in the repair of mismatches in DNA. It is required for dam-dependent methyl-directed DNA mismatch repair. May act as a 'molecular matchmaker', a protein that promotes the formation of a stable complex between two or more DNA-binding proteins in an ATP-dependent manner without itself being part of a final effector complex. In Dictyoglomus turgidum (strain DSM 6724 / Z-1310), this protein is DNA mismatch repair protein MutL.